The chain runs to 471 residues: Adenosylhomocysteinase (471 aa).

Thr-60, Asp-135, and Glu-196 together coordinate substrate. Residue 197–199 participates in NAD(+) binding; it reads TTT. The substrate site is built by Lys-226 and Asp-230. NAD(+) is bound by residues Asn-231, 260–265, Glu-283, Asn-318, 339–341, and Asn-387; these read GYGDVG and IGH.

The protein belongs to the adenosylhomocysteinase family. The cofactor is NAD(+).

Its subcellular location is the cytoplasm. The enzyme catalyses S-adenosyl-L-homocysteine + H2O = L-homocysteine + adenosine. The protein operates within amino-acid biosynthesis; L-homocysteine biosynthesis; L-homocysteine from S-adenosyl-L-homocysteine: step 1/1. In terms of biological role, may play a key role in the regulation of the intracellular concentration of adenosylhomocysteine. In Pelodictyon phaeoclathratiforme (strain DSM 5477 / BU-1), this protein is Adenosylhomocysteinase.